The sequence spans 599 residues: Sulfite reductase [NADPH] flavoprotein alpha-component (599 aa).

The 139-residue stretch at 64 to 202 (ITLISASQTG…VAAQWRARIV (139 aa)) folds into the Flavodoxin-like domain. Residues 70 to 75 (SQTGNA), 117 to 120 (STQG), and 153 to 162 (LGDTSYEFFC) each bind FMN. The region spanning 234–448 (EAPLRASLSV…IEHNDNFRLP (215 aa)) is the FAD-binding FR-type domain. FAD is bound by residues T322, A356, 386–389 (RLYS), 404–406 (TVG), Y410, and 419–422 (GGAS). NADP(+)-binding positions include 519-520 (SR), 525-529 (KIYVQ), and D561. Y599 contacts FAD.

It belongs to the NADPH-dependent sulphite reductase flavoprotein subunit CysJ family. This sequence in the N-terminal section; belongs to the flavodoxin family. In the C-terminal section; belongs to the flavoprotein pyridine nucleotide cytochrome reductase family. As to quaternary structure, alpha(8)-beta(8). The alpha component is a flavoprotein, the beta component is a hemoprotein. FAD serves as cofactor. It depends on FMN as a cofactor.

It catalyses the reaction hydrogen sulfide + 3 NADP(+) + 3 H2O = sulfite + 3 NADPH + 4 H(+). The protein operates within sulfur metabolism; hydrogen sulfide biosynthesis; hydrogen sulfide from sulfite (NADPH route): step 1/1. In terms of biological role, component of the sulfite reductase complex that catalyzes the 6-electron reduction of sulfite to sulfide. This is one of several activities required for the biosynthesis of L-cysteine from sulfate. The flavoprotein component catalyzes the electron flow from NADPH -&gt; FAD -&gt; FMN to the hemoprotein component. The polypeptide is Sulfite reductase [NADPH] flavoprotein alpha-component (Salmonella arizonae (strain ATCC BAA-731 / CDC346-86 / RSK2980)).